A 119-amino-acid polypeptide reads, in one-letter code: Large ribosomal subunit protein uL18 (119 aa).

It belongs to the universal ribosomal protein uL18 family. In terms of assembly, part of the 50S ribosomal subunit; part of the 5S rRNA/L5/L18/L25 subcomplex. Contacts the 5S and 23S rRNAs.

In terms of biological role, this is one of the proteins that bind and probably mediate the attachment of the 5S RNA into the large ribosomal subunit, where it forms part of the central protuberance. This is Large ribosomal subunit protein uL18 from Chlorobium phaeovibrioides (strain DSM 265 / 1930) (Prosthecochloris vibrioformis (strain DSM 265)).